A 420-amino-acid polypeptide reads, in one-letter code: Phytoene synthase 1, chloroplastic (420 aa).

A chloroplast-targeting transit peptide spans 1-70 (MAAITLLRSA…GEIARTSPVY (70 aa)).

This sequence belongs to the phytoene/squalene synthase family. As to expression, expressed in leaves. Highly expressed in developing leaves. Expressed at low levels in roots.

The protein localises to the plastid. Its subcellular location is the chloroplast membrane. It localises to the chloroplast. The protein resides in the plastoglobule. The enzyme catalyses 2 (2E,6E,10E)-geranylgeranyl diphosphate = 15-cis-phytoene + 2 diphosphate. In terms of biological role, catalyzes the conversion of geranylgeranyl diphosphate to phytoene. Mediates the first committed step in carotenoid biosynthesis. The sequence is that of Phytoene synthase 1, chloroplastic from Oryza sativa subsp. japonica (Rice).